We begin with the raw amino-acid sequence, 317 residues long: Protease 7 (317 aa).

The N-terminal stretch at 1 to 20 (MRAKLLGIVLTTPIAISSFA) is a signal peptide. Residues 21-31 (STETLSFTPDN) are Periplasmic-facing. A beta stranded transmembrane segment spans residues 32–41 (INADISLGTL). The Extracellular portion of the chain corresponds to 42–69 (SGKTKERVYLAEEGGRKVSQLDWKFNNA). A beta stranded transmembrane segment spans residues 70–78 (AIIKGAINW). The Periplasmic portion of the chain corresponds to 79–83 (DLMPQ). Residues 84 to 92 (ISIGAAGWT) form a beta stranded membrane-spanning segment. Over 93–130 (TLGSRGGNMVDQDWMDSSNPGTWTDESRHPDTQLNYAN) the chain is Extracellular. Active-site residues include Asp-103 and Asp-105. Residues 131–140 (EFDLNIKGWL) traverse the membrane as a beta stranded segment. The Periplasmic portion of the chain corresponds to 141 to 145 (LNEPN). The beta stranded transmembrane segment at 146–156 (YRLGLMAGYQE) threads the bilayer. Residues 157–197 (SRYSFTARGGSYIYSSEEGFRDDIGSFPNGERAIGYKQRFK) are Extracellular-facing. A beta stranded transmembrane segment spans residues 198 to 209 (MPYIGLTGSYRY). At 210–211 (ED) the chain is on the periplasmic side. The chain crosses the membrane as a beta stranded span at residues 212–221 (FELGGTFKYS). Residues 222-250 (GWVESSDNDEHYDPGKRITYRSKVKDQNY) lie on the Extracellular side of the membrane. Active-site residues include Asp-230 and His-232. Residues 251 to 261 (YSVAVNAGYYV) form a beta stranded membrane-spanning segment. Topologically, residues 262-264 (TPN) are periplasmic. Residues 265 to 274 (AKVYVEGAWN) form a beta stranded membrane-spanning segment. Residues 275 to 306 (RVTNKKGNTSLYDHNNNTSDYSKNGAGIENYN) lie on the Extracellular side of the membrane. Residues 307 to 316 (FITTAGLKYT) traverse the membrane as a beta stranded segment. Residue Phe-317 is a topological domain, periplasmic.

It belongs to the peptidase A26 family. As to quaternary structure, homopentamer.

Its subcellular location is the cell outer membrane. The catalysed reaction is Has a virtual requirement for Arg in the P1 position and a slightly less stringent preference for this residue in the P1' position, which can also contain Lys, Gly or Val.. With respect to regulation, inhibited by zinc. In terms of biological role, protease that can cleave T7 RNA polymerase, ferric enterobactin receptor protein (FEP), antimicrobial peptide protamine and other proteins. This protease has a specificity for paired basic residues. This is Protease 7 (ompT) from Escherichia coli (strain K12).